A 306-amino-acid chain; its full sequence is HORMA domain-containing protein 2 (306 aa).

In terms of domain architecture, HORMA spans 29–232 (HESLVVVKKL…SGFHSMKVKV (204 aa)). Serine 271 carries the phosphoserine modification.

In terms of assembly, interacts with HORMAD1. In terms of processing, phosphorylated in a SPO11-dependent manner. As to expression, specifically expressed in meiotic germ cells.

It localises to the nucleus. The protein resides in the chromosome. Essential for synapsis surveillance during meiotic prophase via the recruitment of ATR activity. Plays a key role in the male mid-pachytene checkpoint and the female meiotic prophase checkpoint: required for efficient build-up of ATR activity on unsynapsed chromosome regions, a process believed to form the basis of meiotic silencing of unsynapsed chromatin (MSUC) and meiotic prophase quality control in both sexes. Required for the DNA double-strand break-independent, BRCA1-dependent activation of ATR on the sex chromosomes that is essential for normal sex body formation. The polypeptide is HORMA domain-containing protein 2 (Hormad2) (Mus musculus (Mouse)).